The following is a 213-amino-acid chain: Na(+)-translocating NADH-quinone reductase subunit D (213 aa).

The next 6 helical transmembrane spans lie at 22–42 (LIAI…TTAL), 43–63 (TMGF…SLLR), 77–97 (IIIS…FFTI), 101–121 (LSVF…AESM), 131–151 (FLDG…ISII), and 183–203 (LGLM…IWIV).

It belongs to the NqrDE/RnfAE family. As to quaternary structure, composed of six subunits; NqrA, NqrB, NqrC, NqrD, NqrE and NqrF.

The protein localises to the cell inner membrane. The catalysed reaction is a ubiquinone + n Na(+)(in) + NADH + H(+) = a ubiquinol + n Na(+)(out) + NAD(+). Functionally, NQR complex catalyzes the reduction of ubiquinone-1 to ubiquinol by two successive reactions, coupled with the transport of Na(+) ions from the cytoplasm to the periplasm. NqrA to NqrE are probably involved in the second step, the conversion of ubisemiquinone to ubiquinol. This chain is Na(+)-translocating NADH-quinone reductase subunit D, found in Chlamydia trachomatis serovar A (strain ATCC VR-571B / DSM 19440 / HAR-13).